The primary structure comprises 233 residues: Biosynthetic peptidoglycan transglycosylase (233 aa).

Residues 8-28 form a helical membrane-spanning segment; it reads LIALPVGIFIFFNAYVYGNII.

This sequence belongs to the glycosyltransferase 51 family.

It is found in the cell inner membrane. It catalyses the reaction [GlcNAc-(1-&gt;4)-Mur2Ac(oyl-L-Ala-gamma-D-Glu-L-Lys-D-Ala-D-Ala)](n)-di-trans,octa-cis-undecaprenyl diphosphate + beta-D-GlcNAc-(1-&gt;4)-Mur2Ac(oyl-L-Ala-gamma-D-Glu-L-Lys-D-Ala-D-Ala)-di-trans,octa-cis-undecaprenyl diphosphate = [GlcNAc-(1-&gt;4)-Mur2Ac(oyl-L-Ala-gamma-D-Glu-L-Lys-D-Ala-D-Ala)](n+1)-di-trans,octa-cis-undecaprenyl diphosphate + di-trans,octa-cis-undecaprenyl diphosphate + H(+). Its pathway is cell wall biogenesis; peptidoglycan biosynthesis. Peptidoglycan polymerase that catalyzes glycan chain elongation from lipid-linked precursors. The chain is Biosynthetic peptidoglycan transglycosylase from Neisseria gonorrhoeae (strain NCCP11945).